The sequence spans 473 residues: H(+)/Cl(-) exchange transporter ClcA (473 aa).

The Cytoplasmic portion of the chain corresponds to 1–32 (MKTDTSTFLAQQIVRLRRRDQIRRLMQRDKTP). Residues 33 to 69 (LAILLMAAVVGTLTGLVGVAFEKAVSWVQNMRIGALV) traverse the membrane as a helical segment. The Periplasmic segment spans residues 70 to 76 (QVADHAF). A helical membrane pass occupies residues 77-100 (LLWPLAFILSALLAMVGYFLVRKF). The Selectivity filter part_1 signature appears at 106–110 (GSGIP). Ser-107 lines the chloride pocket. Positions 109–116 (IPEIEGAL) form an intramembrane region, helical. Residues 117-123 (EELRPVR) are Cytoplasmic-facing. Transmembrane regions (helical) follow at residues 124–141 (WWRVLPVKFIGGMGTLGA) and 148–166 (EGPTVQIGGNLGRMVLDVF). A Selectivity filter part_2 motif is present at residues 146-150 (GREGP). Over 167–176 (RMRSAEARHT) the chain is Cytoplasmic. Intramembrane regions (helical) lie at residues 177–189 (LLATGAAAGLSAA) and 193–201 (PLAGILFII). Residues 202 to 214 (EEMRPQFRYNLIS) lie on the Cytoplasmic side of the membrane. The chain crosses the membrane as a helical span at residues 215–232 (IKAVFTGVIMSSIVFRIF). Residues 233 to 252 (NGEAPIIEVGKLSDAPVNTL) lie on the Periplasmic side of the membrane. A helical membrane pass occupies residues 253-281 (WLYLILGIIFGCVGPVFNSLVLRTQDMFQ). Residues 282-287 (RFHGGE) lie on the Cytoplasmic side of the membrane. Residues 288–309 (IKKWVLMGGAIGGLCGILGLIE) traverse the membrane as a helical segment. Topologically, residues 310 to 329 (PEAAGGGFNLIPIAAAGNFS) are periplasmic. 2 helical membrane passes run 330–349 (VGLLLFIFITRVVTTLLCFS) and 355–376 (GIFAPMLALGTLLGTAFGMAAA). The Selectivity filter part_3 motif lies at 355–359 (GIFAP). Positions 356 and 357 each coordinate chloride. The Periplasmic portion of the chain corresponds to 377–386 (VLFPQYHLEA). The segment at residues 387–401 (GTFAIAGMGALMAAS) is an intramembrane region (helical). The segment at residues 402–404 (VRA) is an intramembrane region (note=Loop between two helices). The helical intramembrane region spans 405-416 (PLTGIVLVLEMT). Residues 417–421 (DNYQL) constitute an intramembrane region (note=Loop between two helices). Residues 422–438 (ILPMIITCLGATLLAQF) form a helical membrane-spanning segment. Residues 439–473 (LGGKPLYSTILARTLAKQDAEQAAKNQNAPAGENT) lie on the Cytoplasmic side of the membrane. Chloride is bound at residue Tyr-445.

This sequence belongs to the chloride channel (TC 2.A.49) family. ClcA subfamily. As to quaternary structure, homodimer.

The protein localises to the cell inner membrane. It carries out the reaction 2 chloride(in) + H(+)(out) = 2 chloride(out) + H(+)(in). Its function is as follows. Proton-coupled chloride transporter. Functions as antiport system and exchanges two chloride ions for 1 proton. Probably acts as an electrical shunt for an outwardly-directed proton pump that is linked to amino acid decarboxylation, as part of the extreme acid resistance (XAR) response. This is H(+)/Cl(-) exchange transporter ClcA from Salmonella newport (strain SL254).